The primary structure comprises 471 residues: 5-hydroxytryptamine receptor 2A (471 aa).

At 1–80 the chain is on the extracellular side; it reads MEILCEDNIS…LQEKNWSALL (80 aa). Residues Asn8, Asn38, Asn44, Asn51, and Asn54 are each glycosylated (N-linked (GlcNAc...) asparagine). A helical transmembrane segment spans residues 81-97; sequence TTVVIILTIAGNILVIM. Over 98–111 the chain is Cytoplasmic; that stretch reads AVSLEKKLQNATNY. Residues 112–137 form a helical membrane-spanning segment; it reads FLMSLAIADMLLGFLVMPVSMLTILY. The Extracellular segment spans residues 138–146; that stretch reads GYRWPLPSK. A helical membrane pass occupies residues 147–171; the sequence is LCAIWIYLDVLFSTASIMHLCAISL. Cys148 and Cys227 form a disulfide bridge. Asp155 is a serotonin binding site. The DRY motif; important for ligand-induced conformation changes signature appears at 172–174; it reads DRY. The Cytoplasmic segment spans residues 172-191; the sequence is DRYVAIQNPIHHSRFNSRTK. A helical membrane pass occupies residues 192–215; that stretch reads AFLKIIAVWTISVGISMPIPVFGL. The Extracellular segment spans residues 216 to 232; sequence QDDSKVFKEGSCLLADD. Residues 233-258 form a helical membrane-spanning segment; that stretch reads NFVLIGSFVAFFIPLTIMVITYFLTI. At 259–322 the chain is on the cytoplasmic side; sequence KSLQKEATLC…QSISNEQKAC (64 aa). Ser280 carries the phosphoserine modification. Residues 323–348 traverse the membrane as a helical segment; sequence KVLGIVFFLFVVMWCPFFITNIMAVI. Position 343 (Asn343) interacts with serotonin. Cys349 and Cys353 are oxidised to a cystine. The Extracellular segment spans residues 349–356; sequence CKESCNEN. A helical membrane pass occupies residues 357–382; the sequence is VIGALLNVFVWIGYLSSAVNPLVYTL. Residues 376-380 carry the NPxxY motif; important for ligand-induced conformation changes and signaling motif; the sequence is NPLVY. Residues 383 to 471 are Cytoplasmic-facing; sequence FNKTYRSAFS…ETVNEKVSCV (89 aa). A PDZ-binding motif is present at residues 469 to 471; sequence SCV.

This sequence belongs to the G-protein coupled receptor 1 family. Interacts (via C-terminus) with MPDZ and PATJ. May interact (via C-terminus) with MPP3, PRDX6, DLG4, DLG1, CASK, APBA1 and MAGI2. Interacts with GRM2 and DRD2; this may affect signaling. In terms of tissue distribution, detected in adult intestine, especially in mucosal epithelium, longitudinal and circular layers of muscularis externa and myenteric plexuses. Highly expressed in Paneth cells, and detected at lower levels in enterocytes (at protein level). Detected in brain cortex.

The protein localises to the cell membrane. It is found in the cell projection. Its subcellular location is the axon. It localises to the cytoplasmic vesicle. The protein resides in the membrane. The protein localises to the caveola. It is found in the dendrite. Its subcellular location is the presynapse. Its activity is regulated as follows. G-protein coupled receptor activity is regulated by lipids: oleamide increases HTR2A-mediated activity. Functionally, G-protein coupled receptor for 5-hydroxytryptamine (serotonin). Also functions as a receptor for various drugs and psychoactive substances, including mescaline, psilocybin, 1-(2,5-dimethoxy-4-iodophenyl)-2-aminopropane (DOI) and lysergic acid diethylamide (LSD). Ligand binding causes a conformation change that triggers signaling via guanine nucleotide-binding proteins (G proteins) and modulates the activity of downstream effectors. HTR2A is coupled to G(q)/G(11) G alpha proteins and activates phospholipase C-beta, releasing diacylglycerol (DAG) and inositol 1,4,5-trisphosphate (IP3) second messengers that modulate the activity of phosphatidylinositol 3-kinase and promote the release of Ca(2+) ions from intracellular stores, respectively. Beta-arrestin family members inhibit signaling via G proteins and mediate activation of alternative signaling pathways. Affects neural activity, perception, cognition and mood. Plays a role in the regulation of behavior, including responses to anxiogenic situations and psychoactive substances. Plays a role in intestinal smooth muscle contraction, and may play a role in arterial vasoconstriction. The sequence is that of 5-hydroxytryptamine receptor 2A (Htr2a) from Rattus norvegicus (Rat).